Consider the following 933-residue polypeptide: Exosome complex exonuclease RRP44 homolog A (933 aa).

Residues 50-163 enclose the PINc domain; it reads KIIVVDTNVV…LVTNDRENKR (114 aa). Residues 217-321 enclose the CSD1 domain; the sequence is QEHKPMSEIT…NVDDAPRTSN (105 aa). The disordered stretch occupies residues 296–336; that stretch reads AEEDDEEDDTVHLAPDNVDDAPRTSNLSHETSGDKNAAPVR. Residues 371–438 enclose the CSD2 domain; it reads ALFVSKDRRI…ETEVVLIEND (68 aa). One can recognise an RNB domain in the interval 469 to 798; it reads RQDLRHLLVF…FVHRLLAASL (330 aa). Positions 481 and 490 each coordinate Mg(2+).

The protein belongs to the RNR ribonuclease family. Probable component of the RNA exosome complex. Mg(2+) is required as a cofactor.

It localises to the nucleus. In terms of biological role, catalytic component of the RNA exosome complex which has 3'-&gt;5' exoribonuclease activity and participates in a multitude of cellular RNA processing and degradation events. Required for 5.8S rRNA intermediate processing and the degradation of 5' external transcribed spacer (5' ETS), a maturation by-product of rRNA synthesis. Is not involved in the degradation of turnip crinkle virus (TCV) RNA and significant virus resistance. Required for normal development of female gametophytes and early embryogenesis. The sequence is that of Exosome complex exonuclease RRP44 homolog A from Arabidopsis thaliana (Mouse-ear cress).